A 234-amino-acid chain; its full sequence is Lipoprotein-releasing system ATP-binding protein LolD (234 aa).

The region spanning 7-233 (LQCINLCKRY…LQHHLTLVGA (227 aa)) is the ABC transporter domain. 43–50 (GSSGSGKS) lines the ATP pocket.

It belongs to the ABC transporter superfamily. Lipoprotein translocase (TC 3.A.1.125) family. The complex is composed of two ATP-binding proteins (LolD) and two transmembrane proteins (LolC and LolE).

The protein resides in the cell inner membrane. In terms of biological role, part of the ABC transporter complex LolCDE involved in the translocation of mature outer membrane-directed lipoproteins, from the inner membrane to the periplasmic chaperone, LolA. Responsible for the formation of the LolA-lipoprotein complex in an ATP-dependent manner. The chain is Lipoprotein-releasing system ATP-binding protein LolD from Yersinia pestis bv. Antiqua (strain Antiqua).